Here is a 338-residue protein sequence, read N- to C-terminus: Thiamine thiazole synthase (338 aa).

The segment at 1–43 (MSPVATESMYKPTTINQTAHQQAMDPLKSKQQSNATVNKPAFK) is disordered. A compositionally biased stretch (polar residues) spans 11 to 21 (KPTTINQTAHQ). Substrate is bound by residues alanine 91, 112–113 (ES), glycine 120, and cysteine 185. Cysteine 221 carries the 2,3-didehydroalanine (Cys) modification. Substrate is bound by residues aspartate 223, histidine 238, methionine 290, and 300 to 302 (RMG).

The protein belongs to the THI4 family. Homooctamer. Requires Fe cation as cofactor. Post-translationally, during the catalytic reaction, a sulfide is transferred from Cys-221 to a reaction intermediate, generating a dehydroalanine residue. As to expression, highly expressed in haustoria, and only in low amounts in intercellular hyphae. Found in the basal hyphae of the uredia, but not in the pedicels and only at very low levels in uredospores.

It localises to the cytoplasm. It is found in the nucleus. It carries out the reaction [ADP-thiazole synthase]-L-cysteine + glycine + NAD(+) = [ADP-thiazole synthase]-dehydroalanine + ADP-5-ethyl-4-methylthiazole-2-carboxylate + nicotinamide + 3 H2O + 2 H(+). Its function is as follows. Involved in biosynthesis of the thiamine precursor thiazole. Catalyzes the conversion of NAD and glycine to adenosine diphosphate 5-(2-hydroxyethyl)-4-methylthiazole-2-carboxylic acid (ADT), an adenylated thiazole intermediate. The reaction includes an iron-dependent sulfide transfer from a conserved cysteine residue of the protein to a thiazole intermediate. The enzyme can only undergo a single turnover, which suggests it is a suicide enzyme. May have additional roles in adaptation to various stress conditions and in DNA damage tolerance. This Uromyces fabae (Rust fungus) protein is Thiamine thiazole synthase (THI2).